Consider the following 163-residue polypeptide: Large ribosomal subunit protein uL13m (163 aa).

S2 carries the N-acetylserine modification. The propeptide occupies 2 to 4; it reads SQK.

Belongs to the universal ribosomal protein uL13 family. In terms of assembly, component of the mitochondrial large ribosomal subunit (mt-LSU). Mature yeast 74S mitochondrial ribosomes consist of a small (37S) and a large (54S) subunit. The 37S small subunit contains a 15S ribosomal RNA (15S mt-rRNA) and 34 different proteins. The 54S large subunit contains a 21S rRNA (21S mt-rRNA) and 46 different proteins.

The protein localises to the mitochondrion. Functionally, component of the mitochondrial ribosome (mitoribosome), a dedicated translation machinery responsible for the synthesis of mitochondrial genome-encoded proteins, including at least some of the essential transmembrane subunits of the mitochondrial respiratory chain. The mitoribosomes are attached to the mitochondrial inner membrane and translation products are cotranslationally integrated into the membrane. The polypeptide is Large ribosomal subunit protein uL13m (MRPL23) (Saccharomyces cerevisiae (strain ATCC 204508 / S288c) (Baker's yeast)).